We begin with the raw amino-acid sequence, 571 residues long: Proline--tRNA ligase (571 aa).

It belongs to the class-II aminoacyl-tRNA synthetase family. ProS type 1 subfamily. Homodimer.

Its subcellular location is the cytoplasm. The catalysed reaction is tRNA(Pro) + L-proline + ATP = L-prolyl-tRNA(Pro) + AMP + diphosphate. Functionally, catalyzes the attachment of proline to tRNA(Pro) in a two-step reaction: proline is first activated by ATP to form Pro-AMP and then transferred to the acceptor end of tRNA(Pro). As ProRS can inadvertently accommodate and process non-cognate amino acids such as alanine and cysteine, to avoid such errors it has two additional distinct editing activities against alanine. One activity is designated as 'pretransfer' editing and involves the tRNA(Pro)-independent hydrolysis of activated Ala-AMP. The other activity is designated 'posttransfer' editing and involves deacylation of mischarged Ala-tRNA(Pro). The misacylated Cys-tRNA(Pro) is not edited by ProRS. The chain is Proline--tRNA ligase from Shewanella sp. (strain W3-18-1).